The sequence spans 362 residues: MLSQLNLRFHKKLIEALKTRAGRENTSVNALAERFLDDGLKTVAPGDGYFQLIADPEATVRQLYRHIILGQTFGTSALSRDELRFVLVHVREAFLRGHNRLATLPALDTLLDITGNLLAWQVEHDRPVDGHYLKGIFRLAGKNWTEEFEAFRAALRPVVDQMYAEHLLRPLESDCFGLAEVPDAVLAEIFTLPRLKAVFPLMLRGLDWNTEQARTLAQELRPVISAVTETIEAGTLRLEIRVDGQHPGERPGAWYTTPRLHLLITGQDFVVPYGWEALSELLGLFTLYARHPEALTHGHQGERVMFSPPGNVTPEGFFGIDGLRIFMPAEAFETLVRELATRCQEGPLAEALTGLRCLYGDL.

In terms of biological role, transcription repression of its own gene by binding to the PIF operator (pifO) and replication initiation from the primary origin (ori-1). Transcriptional repressor of the pifA and pifB. This is Transcriptional repressor PifC (pifC) from Escherichia coli (strain K12).